A 282-amino-acid polypeptide reads, in one-letter code: Bifunctional protein FolD (282 aa).

NADP(+) is bound by residues 164 to 166 (GRS) and Ser189.

This sequence belongs to the tetrahydrofolate dehydrogenase/cyclohydrolase family. Homodimer.

It catalyses the reaction (6R)-5,10-methylene-5,6,7,8-tetrahydrofolate + NADP(+) = (6R)-5,10-methenyltetrahydrofolate + NADPH. The catalysed reaction is (6R)-5,10-methenyltetrahydrofolate + H2O = (6R)-10-formyltetrahydrofolate + H(+). The protein operates within one-carbon metabolism; tetrahydrofolate interconversion. Catalyzes the oxidation of 5,10-methylenetetrahydrofolate to 5,10-methenyltetrahydrofolate and then the hydrolysis of 5,10-methenyltetrahydrofolate to 10-formyltetrahydrofolate. The chain is Bifunctional protein FolD from Streptococcus suis (strain 05ZYH33).